Consider the following 585-residue polypeptide: MGLRFPPKVLEHILSFIDSNEDRNSVSLVCKSWFETERKTRKRVFVGNCYAVSPAAVTRRFPEMRSLTLKGKPHFADYNLVPDGWGGYAWPWIEAMAAKSSSLEEIRMKRMVVTDECLEKIAASFKDFKVLVLTSCEGFSTDGIAAIAATCRNLRVLELRECIVEDLGGDWLSYFPESSTSLVSLDFSCLDSEVKISDLERLVSRSPNLKSLKLNPAVTLDGLVSLLRCAPQLTELGTGSFAAQLKPEAFSKLSEAFSNCKQLQSLSGLWDVLPEYLPALYSVCPGLTSLNLSYATVRMPDLVELLRRCSKLQKLWVMDLIEDKGLEAVASYCKELRELRVFPSEPDLDATNIPLTEQGLVFVSKGCRKLESVLYFCVQFTNAALFTIARKRPNLKCFRLCVIEPFAPDYKTNEPLDKGFKAIAEGCRDLRRLSVSGLLSDKAFKYIGKHAKKVRMLSIAFAGDSDLMLHHLLSGCESLKKLEIRDCPFGDTALLEHAAKLETMRSLWMSSCFVSFGACKLLSQKMPRLNVEVIDEHPPESRPESSPVERIYIYRTVAGPRMDTPEFVWTIHKNPENGVSHLAIK.

The F-box domain occupies Met1–Asn48. Position 70 (Lys70) interacts with 1D-myo-inositol hexakisphosphate. The interval Asp77–Tyr78 is interaction with auxin-responsive proteins. Residues Lys109–Arg110 and Arg340 contribute to the 1D-myo-inositol hexakisphosphate site. An interaction with auxin-responsive proteins region spans residues Pro343–Leu348. 1D-myo-inositol hexakisphosphate is bound at residue Cys397–Arg399. Positions Cys401 to Pro405 are interaction with auxin-responsive proteins. A 1D-myo-inositol hexakisphosphate-binding site is contributed by Arg432. Positions Ala460 to Phe461 are interaction with auxin-responsive proteins. Residues Lys480 to Lys481 and Arg505 contribute to the 1D-myo-inositol hexakisphosphate site.

Part of a SCF (SKP1-cullin-F-box) protein ligase complex. Interacts with CUL1, SKP1A/ASK1 and SKP1B/ASK2. Interacts with Aux/IAA proteins (IAA7 and IAA12) in an auxin-dependent manner. As to expression, ubiquitous.

Its subcellular location is the nucleus. The protein operates within protein modification; protein ubiquitination. In terms of biological role, component of SCF(ASK-cullin-F-box) E3 ubiquitin ligase complexes, which may mediate the ubiquitination and subsequent proteasomal degradation of target proteins. Auxin receptor that mediates Aux/IAA proteins proteasomal degradation and auxin-regulated transcription. Involved in embryogenesis regulation by auxin. Confers sensitivity to the virulent bacterial pathogen P.syringae. Mediates glucose repression in yeast. In Arabidopsis thaliana (Mouse-ear cress), this protein is GRR1-like protein 1 (GRH1).